The primary structure comprises 453 residues: Aldehyde dehydrogenase, dimeric NADP-preferring (453 aa).

S2 carries the N-acetylserine modification. K178 bears the N6-acetyllysine mark. 188 to 193 (GSTAVG) contributes to the NAD(+) binding site. Residue K194 is modified to N6-acetyllysine. Catalysis depends on residues E210 and C244.

The protein belongs to the aldehyde dehydrogenase family. In terms of assembly, homodimer. As to expression, constitutively expressed in cornea, stomach, skin, bladder and lungs. Lowest expression levels in lungs and bladder.

It localises to the cytoplasm. The enzyme catalyses an aldehyde + NAD(+) + H2O = a carboxylate + NADH + 2 H(+). The catalysed reaction is octanal + NAD(+) + H2O = octanoate + NADH + 2 H(+). ALDHs play a major role in the detoxification of alcohol-derived acetaldehyde. They are involved in the metabolism of corticosteroids, biogenic amines, neurotransmitters, and lipid peroxidation. Oxidizes medium and long chain aldehydes into non-toxic fatty acids. Preferentially oxidizes aromatic aldehyde substrates. Comprises about 50 percent of corneal epithelial soluble proteins. May play a role in preventing corneal damage caused by ultraviolet light. In Mus musculus (Mouse), this protein is Aldehyde dehydrogenase, dimeric NADP-preferring (Aldh3a1).